The following is a 175-amino-acid chain: uncharacterized protein (175 aa).

A signal peptide spans 1–33 (MERLPYEIVSTIFRKAILHYVLIRGTTYPQSLA).

This is an uncharacterized protein from Methanocaldococcus jannaschii (strain ATCC 43067 / DSM 2661 / JAL-1 / JCM 10045 / NBRC 100440) (Methanococcus jannaschii).